The sequence spans 411 residues: Dipeptidase 1 (411 aa).

The first 16 residues, 1–16 (MWSGWWLWPLVAVCTA), serve as a signal peptide directing secretion. Zn(2+) is bound by residues His-36 and Asp-38. Asn-57 carries an N-linked (GlcNAc...) asparagine glycan. The cysteines at positions 87 and 170 are disulfide-linked. Position 141 (Glu-141) interacts with Zn(2+). Substrate is bound at residue His-168. Zn(2+) contacts are provided by His-214 and His-235. The cysteines at positions 242 and 274 are disulfide-linked. Arg-246 contacts substrate. Residue Asn-279 is glycosylated (N-linked (GlcNAc...) asparagine). Asp-304 is a binding site for substrate. Asn-332 and Asn-358 each carry an N-linked (GlcNAc...) asparagine glycan. Ser-385 carries the GPI-anchor amidated serine lipid modification. Positions 386–411 (GASSLHRHWGLLLASLAPLVLCLSLL) are cleaved as a propeptide — removed in mature form.

It belongs to the metallo-dependent hydrolases superfamily. Peptidase M19 family. As to quaternary structure, homodimer; disulfide-linked. The cofactor is Zn(2+). Expressed in lung and kidneys.

Its subcellular location is the apical cell membrane. It is found in the cell projection. It localises to the microvillus membrane. It catalyses the reaction an L-aminoacyl-L-amino acid + H2O = 2 an L-alpha-amino acid. The enzyme catalyses leukotriene D4 + H2O = leukotriene E4 + glycine. It carries out the reaction a beta-lactam + H2O = a substituted beta-amino acid. The catalysed reaction is L-cystine-bis-glycine + 2 H2O = L-cystine + 2 glycine. It catalyses the reaction glycyldehydrophenylalanine + H2O = 2,3-didehydrophenylalanine + glycine. Inhibited by L-penicillamine. Beta-lactamase activity is inhibited by cilastatin. In terms of biological role, hydrolyzes a wide range of dipeptides including the conversion of leukotriene D4 to leukotriene E4. Hydrolyzes cystinyl-bis-glycine (cys-bis-gly) formed during glutathione degradation. Also possesses beta lactamase activity and can hydrolyze the beta-lactam antibiotic imipenem. Independently of its dipeptidase activity, acts as an adhesion receptor for neutrophil recruitment from bloodstream into inflamed lungs and liver. This chain is Dipeptidase 1 (DPEP1), found in Homo sapiens (Human).